The sequence spans 520 residues: Bifunctional purine biosynthesis protein PurH (520 aa).

The MGS-like domain occupies 1–147 (MAKIGRALIS…KNNRDVTVVV (147 aa)).

It belongs to the PurH family.

It carries out the reaction (6R)-10-formyltetrahydrofolate + 5-amino-1-(5-phospho-beta-D-ribosyl)imidazole-4-carboxamide = 5-formamido-1-(5-phospho-D-ribosyl)imidazole-4-carboxamide + (6S)-5,6,7,8-tetrahydrofolate. The catalysed reaction is IMP + H2O = 5-formamido-1-(5-phospho-D-ribosyl)imidazole-4-carboxamide. It participates in purine metabolism; IMP biosynthesis via de novo pathway; 5-formamido-1-(5-phospho-D-ribosyl)imidazole-4-carboxamide from 5-amino-1-(5-phospho-D-ribosyl)imidazole-4-carboxamide (10-formyl THF route): step 1/1. It functions in the pathway purine metabolism; IMP biosynthesis via de novo pathway; IMP from 5-formamido-1-(5-phospho-D-ribosyl)imidazole-4-carboxamide: step 1/1. This Geobacter sp. (strain M21) protein is Bifunctional purine biosynthesis protein PurH.